The primary structure comprises 318 residues: Ribose-phosphate pyrophosphokinase 2 (318 aa).

Arg-96–Asp-101 lines the ATP pocket. Mg(2+)-binding residues include Asp-128, His-130, Asp-139, and Asp-143. His-130 is an ATP binding site. A binding of phosphoribosylpyrophosphate region spans residues Lys-212–Gly-227.

It belongs to the ribose-phosphate pyrophosphokinase family. In terms of assembly, homodimer. The active form is probably a hexamer composed of 3 homodimers. It depends on Mg(2+) as a cofactor.

The enzyme catalyses D-ribose 5-phosphate + ATP = 5-phospho-alpha-D-ribose 1-diphosphate + AMP + H(+). Its pathway is metabolic intermediate biosynthesis; 5-phospho-alpha-D-ribose 1-diphosphate biosynthesis; 5-phospho-alpha-D-ribose 1-diphosphate from D-ribose 5-phosphate (route I): step 1/1. Its activity is regulated as follows. Activated by magnesium and inorganic phosphate. Competitively or non-competitively inhibited by ADP, 2,3-bisphosphoglyceride or GDP. Its function is as follows. Catalyzes the synthesis of phosphoribosylpyrophosphate (PRPP) that is essential for nucleotide synthesis. The sequence is that of Ribose-phosphate pyrophosphokinase 2 (prps2) from Xenopus tropicalis (Western clawed frog).